A 193-amino-acid chain; its full sequence is Guanylate kinase (193 aa).

The 180-residue stretch at 12-191 (DLLTIVAGPT…AANELWLAMN (180 aa)) folds into the Guanylate kinase-like domain. Position 19–26 (19–26 (GPTAVGKG)) interacts with ATP.

Belongs to the guanylate kinase family.

It is found in the cytoplasm. The catalysed reaction is GMP + ATP = GDP + ADP. Essential for recycling GMP and indirectly, cGMP. The polypeptide is Guanylate kinase (Tropheryma whipplei (strain TW08/27) (Whipple's bacillus)).